Reading from the N-terminus, the 45-residue chain is Phospholipase A2 3 (45 aa).

3 residues coordinate Ca(2+): Y20, G24, and G25. Residues C21 and C36 are joined by a disulfide bond. The active site involves H39. D40 provides a ligand contact to Ca(2+).

It depends on Ca(2+) as a cofactor. As to expression, expressed by the venom gland.

It is found in the secreted. The catalysed reaction is a 1,2-diacyl-sn-glycero-3-phosphocholine + H2O = a 1-acyl-sn-glycero-3-phosphocholine + a fatty acid + H(+). Functionally, PLA2 catalyzes the calcium-dependent hydrolysis of the 2-acyl groups in 3-sn-phosphoglycerides. This is Phospholipase A2 3 from Bothrops diporus (Chaco lancehead).